Consider the following 159-residue polypeptide: Transcription elongation factor A protein-like 1 (159 aa).

The tract at residues 1-99 (MDKPRKENEE…CGVGKHKLEE (99 aa)) is disordered. Positions 17–34 (KTDEERPPVEHSPEKQSL) are enriched in basic and acidic residues. A compositionally biased stretch (acidic residues) spans 37–54 (QSSEEQSSEEEFFPEELL). Residues 64 to 80 (SEERPPQEGLSRKDLFE) are compositionally biased toward basic and acidic residues.

Belongs to the TFS-II family. TFA subfamily.

The protein localises to the nucleus. In terms of biological role, may be involved in transcriptional regulation. Modulates various viral and cellular promoters in a promoter context-dependent manner. Does not bind DNA directly. In Ateles geoffroyi (Black-handed spider monkey), this protein is Transcription elongation factor A protein-like 1.